Here is a 245-residue protein sequence, read N- to C-terminus: Orotidine 5'-phosphate decarboxylase (245 aa).

Substrate-binding positions include aspartate 22, lysine 44, 71–80 (DLKFHDIPNT), threonine 131, arginine 192, glutamine 201, glycine 221, and arginine 222. Lysine 73 serves as the catalytic Proton donor.

The protein belongs to the OMP decarboxylase family. Type 1 subfamily. As to quaternary structure, homodimer.

The catalysed reaction is orotidine 5'-phosphate + H(+) = UMP + CO2. The protein operates within pyrimidine metabolism; UMP biosynthesis via de novo pathway; UMP from orotate: step 2/2. Catalyzes the decarboxylation of orotidine 5'-monophosphate (OMP) to uridine 5'-monophosphate (UMP). The polypeptide is Orotidine 5'-phosphate decarboxylase (Shigella flexneri serotype 5b (strain 8401)).